The chain runs to 229 residues: MELLLLSNSTLPGKAWLEHALPLIANQLNGRRSAVFIPFAGVTQTWDEYTDKTAEVLAPLGINVTGIHRVADPLAAIEKAEIVIVGGGNTFQLLKESRERGLLAPVADRVKRGALYIGWSAGANLACPTIRTTNDMPIVDPNGFDALDLFPLQINPHFTNALPEGHKGETREQHIRELLVVAPELTVIGLPEGNWIQVSNGQAVLGGPNTTWVFKAGEEAVALEAGHRF.

Active-site charge relay system residues include Ser120, Asp135, and His157.

Belongs to the peptidase S51 family.

It localises to the cytoplasm. It catalyses the reaction Dipeptidase E catalyzes the hydrolysis of dipeptides Asp-|-Xaa. It does not act on peptides with N-terminal Glu, Asn or Gln, nor does it cleave isoaspartyl peptides.. Its function is as follows. Hydrolyzes dipeptides containing N-terminal aspartate residues. May play a role in allowing the cell to use peptide aspartate to spare carbon otherwise required for the synthesis of the aspartate family of amino acids. The protein is Peptidase E of Salmonella typhi.